The following is a 252-amino-acid chain: Geranylgeranylglyceryl phosphate synthase (252 aa).

Mg(2+) is bound by residues Asp-25 and Ser-54. Residues 174-180 (FMDAGSG), 205-206 (GG), and 227-228 (GN) each bind sn-glycerol 1-phosphate.

It belongs to the GGGP/HepGP synthase family. Group II subfamily. Homohexamer. The cofactor is Mg(2+).

The enzyme catalyses sn-glycerol 1-phosphate + (2E,6E,10E)-geranylgeranyl diphosphate = sn-3-O-(geranylgeranyl)glycerol 1-phosphate + diphosphate. Its function is as follows. Prenyltransferase that catalyzes the transfer of the geranylgeranyl moiety of geranylgeranyl diphosphate (GGPP) to the C3 hydroxyl of sn-glycerol-1-phosphate (G1P). In Chitinophaga pinensis (strain ATCC 43595 / DSM 2588 / LMG 13176 / NBRC 15968 / NCIMB 11800 / UQM 2034), this protein is Geranylgeranylglyceryl phosphate synthase.